Here is a 201-residue protein sequence, read N- to C-terminus: Peptidyl-tRNA hydrolase (201 aa).

Y15 serves as a coordination point for tRNA. The active-site Proton acceptor is H20. Y66, N68, and N114 together coordinate tRNA.

Belongs to the PTH family. As to quaternary structure, monomer.

It localises to the cytoplasm. It carries out the reaction an N-acyl-L-alpha-aminoacyl-tRNA + H2O = an N-acyl-L-amino acid + a tRNA + H(+). Functionally, hydrolyzes ribosome-free peptidyl-tRNAs (with 1 or more amino acids incorporated), which drop off the ribosome during protein synthesis, or as a result of ribosome stalling. Catalyzes the release of premature peptidyl moieties from peptidyl-tRNA molecules trapped in stalled 50S ribosomal subunits, and thus maintains levels of free tRNAs and 50S ribosomes. The polypeptide is Peptidyl-tRNA hydrolase (Burkholderia mallei (strain ATCC 23344)).